The primary structure comprises 152 residues: Xanthine-guanine phosphoribosyltransferase (152 aa).

5-phospho-alpha-D-ribose 1-diphosphate is bound by residues 37–38 (RG), Arg-69, and 88–96 (DDLVDTGGT). Arg-69 contacts GMP. Asp-89 serves as a coordination point for Mg(2+). Residues Asp-92 and Ile-135 each coordinate guanine. Positions 92 and 135 each coordinate xanthine. GMP-binding positions include 92-96 (DTGGT) and 134-135 (WI).

Belongs to the purine/pyrimidine phosphoribosyltransferase family. XGPT subfamily. As to quaternary structure, homotetramer. Mg(2+) serves as cofactor.

It localises to the cell inner membrane. The catalysed reaction is GMP + diphosphate = guanine + 5-phospho-alpha-D-ribose 1-diphosphate. The enzyme catalyses XMP + diphosphate = xanthine + 5-phospho-alpha-D-ribose 1-diphosphate. It carries out the reaction IMP + diphosphate = hypoxanthine + 5-phospho-alpha-D-ribose 1-diphosphate. Its pathway is purine metabolism; GMP biosynthesis via salvage pathway; GMP from guanine: step 1/1. It participates in purine metabolism; XMP biosynthesis via salvage pathway; XMP from xanthine: step 1/1. Functionally, purine salvage pathway enzyme that catalyzes the transfer of the ribosyl-5-phosphate group from 5-phospho-alpha-D-ribose 1-diphosphate (PRPP) to the N9 position of the 6-oxopurines guanine and xanthine to form the corresponding ribonucleotides GMP (guanosine 5'-monophosphate) and XMP (xanthosine 5'-monophosphate), with the release of PPi. To a lesser extent, also acts on hypoxanthine. This is Xanthine-guanine phosphoribosyltransferase from Photobacterium profundum (strain SS9).